Consider the following 484-residue polypeptide: PTS system N-acetylmuramic acid-specific EIIBC component (484 aa).

The PTS EIIB type-1 domain maps to 1–89; sequence MAKITTSMIQ…NEMMEGEEDN (89 aa). C28 (phosphocysteine intermediate; for EIIB activity) is an active-site residue. Positions 83–106 are disordered; the sequence is MEGEEDNSASTTAESRDLKDVASE. The segment covering 96 to 106 has biased composition (basic and acidic residues); that stretch reads ESRDLKDVASE. Residues 124-484 enclose the PTS EIIC type-1 domain; that stretch reads SKFATIFTPL…FFGTKNVDLS (361 aa). The next 10 membrane-spanning stretches (helical) occupy residues 126–146, 168–188, 194–214, 232–252, 273–293, 312–332, 345–365, 379–399, 404–424, and 451–471; these read FATIFTPLIPGFIAAGLLLGF, LILYMKVFSKGLFSFLSILIG, AFGGSGVNGAILASLFVLGYN, GIDPRGNIIGVLIAAIIGAGV, TLLIMGAVTFVVIMPIGGVLF, ILAGLFLISVMFGIHQGFVPV, LFPILAMAGAGQVGAALALYA, GSIIPGFLGIGEPLIYGVTLP, FITACVGGAAGGFFIGLVSYM, and IFAGMLVFAAGLVISYVAGFL.

The protein localises to the cell inner membrane. The enzyme catalyses N-acetyl-beta-D-muramate(out) + N(pros)-phospho-L-histidyl-[protein] = N-acetyl-beta-D-muramate 6-phosphate(in) + L-histidyl-[protein]. Functionally, the phosphoenolpyruvate-dependent sugar phosphotransferase system (sugar PTS), a major carbohydrate active transport system, catalyzes the phosphorylation of incoming sugar substrates concomitantly with their translocation across the cell membrane. This system is involved in N-acetylmuramic acid (MurNAc) transport, yielding cytoplasmic MurNAc-6-P. Is also able to take up anhydro-N-acetylmuramic acid (anhMurNAc), but cannot phosphorylate the carbon 6, probably because of the 1,6-anhydro ring. The sequence is that of PTS system N-acetylmuramic acid-specific EIIBC component (murP) from Aliivibrio fischeri (strain ATCC 700601 / ES114) (Vibrio fischeri).